The chain runs to 150 residues: Mating pheromone 1 (150 aa).

Positions 1–16 (MKAIFIILAILMVTQA) are cleaved as a signal peptide. Positions 17–52 (FKMTSKVNTKLQSQIQSKFQSKNKLASTFQTSSKLK) are excised as a propeptide.

The protein resides in the secreted. Functionally, mating ciliate pheromones (or gamones) are diffusible extracellular communication signals that distinguish different intraspecific classes of cells commonly referred to as 'mating types'. They prepare the latter for conjugation by changing their cell surface properties. In Euplotoides octocarinatus (Freshwater ciliate), this protein is Mating pheromone 1.